The chain runs to 233 residues: Pirin-like protein YhaK (233 aa).

It belongs to the pirin family. As to quaternary structure, monomer.

The protein localises to the cytoplasm. Functionally, does not have quercetin 2,3-dioxygenase activity. The chain is Pirin-like protein YhaK (yhaK) from Escherichia coli O157:H7.